Consider the following 376-residue polypeptide: Erythronate-4-phosphate dehydrogenase (376 aa).

2 residues coordinate substrate: Ser-45 and Thr-67. NAD(+) is bound by residues 127–128 (QV), Asp-147, and Thr-176. Residue Arg-209 is part of the active site. Asp-233 is an NAD(+) binding site. Glu-238 is an active-site residue. Catalysis depends on His-255, which acts as the Proton donor. Gly-258 is a binding site for NAD(+). Tyr-259 provides a ligand contact to substrate.

It belongs to the D-isomer specific 2-hydroxyacid dehydrogenase family. PdxB subfamily. As to quaternary structure, homodimer.

Its subcellular location is the cytoplasm. It catalyses the reaction 4-phospho-D-erythronate + NAD(+) = (R)-3-hydroxy-2-oxo-4-phosphooxybutanoate + NADH + H(+). It functions in the pathway cofactor biosynthesis; pyridoxine 5'-phosphate biosynthesis; pyridoxine 5'-phosphate from D-erythrose 4-phosphate: step 2/5. Its function is as follows. Catalyzes the oxidation of erythronate-4-phosphate to 3-hydroxy-2-oxo-4-phosphonooxybutanoate. This Aliivibrio fischeri (strain ATCC 700601 / ES114) (Vibrio fischeri) protein is Erythronate-4-phosphate dehydrogenase.